The sequence spans 365 residues: tRNA/tmRNA (uracil-C(5))-methyltransferase (365 aa).

5 residues coordinate S-adenosyl-L-methionine: Gln-189, Tyr-217, Asn-222, Glu-238, and Asp-298. The Nucleophile role is filled by Cys-323. Residue Glu-357 is the Proton acceptor of the active site.

It belongs to the class I-like SAM-binding methyltransferase superfamily. RNA M5U methyltransferase family. TrmA subfamily.

It carries out the reaction uridine(54) in tRNA + S-adenosyl-L-methionine = 5-methyluridine(54) in tRNA + S-adenosyl-L-homocysteine + H(+). The enzyme catalyses uridine(341) in tmRNA + S-adenosyl-L-methionine = 5-methyluridine(341) in tmRNA + S-adenosyl-L-homocysteine + H(+). Functionally, dual-specificity methyltransferase that catalyzes the formation of 5-methyluridine at position 54 (m5U54) in all tRNAs, and that of position 341 (m5U341) in tmRNA (transfer-mRNA). In Pasteurella multocida (strain Pm70), this protein is tRNA/tmRNA (uracil-C(5))-methyltransferase.